Here is a 445-residue protein sequence, read N- to C-terminus: Mitochondrial enolase superfamily member 1 (445 aa).

Residues 24 to 26 (GSD), Tyr34, and Lys220 contribute to the substrate site. Lys222 acts as the Proton donor/acceptor in catalysis. Asp250 contacts Mg(2+). Residues Asn252, Glu276, Glu305, 355-357 (HAG), and Glu386 contribute to the substrate site. Mg(2+) is bound by residues Glu276 and Glu305. The active site involves His355.

The protein belongs to the mandelate racemase/muconate lactonizing enzyme family. ENOSF1 subfamily. The cofactor is Mg(2+).

It localises to the mitochondrion. The catalysed reaction is L-fuconate = 2-dehydro-3-deoxy-L-fuconate + H2O. Functionally, plays a role in the catabolism of L-fucose, a sugar that is part of the carbohydrates that are attached to cellular glycoproteins. Catalyzes the dehydration of L-fuconate to 2-keto-3-deoxy-L-fuconate by the abstraction of the 2-proton to generate an enediolate intermediate that is stabilized by the magnesium ion. May down-regulate thymidylate synthase activity, possibly already at the RNA level, by promoting the degradation of TYMS mRNA via an antisense RNA-based mechanism. The protein is Mitochondrial enolase superfamily member 1 (enosf1) of Xenopus laevis (African clawed frog).